We begin with the raw amino-acid sequence, 182 residues long: pEARLI1-like lipid transfer protein 2 (182 aa).

The first 25 residues, 1 to 25 (MASKNSASLALFFALNILFFTLTAG), serve as a signal peptide directing secretion. Over residues 33-92 (SPKPRPLPNPKVPSPKVPTPSVPSPYVPTPSVPSPSVPTPSVPSPSVPSPNPTPVIPPRT) the composition is skewed to pro residues. The segment at 33–94 (SPKPRPLPNP…TPVIPPRTPG (62 aa)) is disordered. A run of 7 repeats spans residues 42–46 (PKVPS), 47–51 (PKVPT), 52–56 (PSVPS), 62–66 (PSVPS), 67–71 (PSVPT), 72–76 (PSVPS), and 77–81 (PSVPS). The interval 42 to 81 (PKVPSPKVPTPSVPSPYVPTPSVPSPSVPTPSVPSPSVPS) is 7 X 5 AA repeats of P-[KS]-V-P-[ST].

This sequence belongs to the plant LTP family. PEARLI1 subfamily.

It is found in the secreted. The protein localises to the cell wall. Its function is as follows. Probable lipid transfer protein (LTP). May improve freezing survival. Seems to control the flowering process and lignin synthesis. Confers resistance to Botrytis cinerea. This Arabidopsis thaliana (Mouse-ear cress) protein is pEARLI1-like lipid transfer protein 2.